The sequence spans 108 residues: Trissin (108 aa).

An N-terminal signal peptide occupies residues 1 to 29 (MTKTTMHWLAHFQIILLCIWLMCPPSSQA). Disulfide bonds link cysteine 32–cysteine 43, cysteine 35–cysteine 52, and cysteine 39–cysteine 51. Positions 57–108 (RKRSDPDALRQSSNRRLIDFILLQGRALFTQELRERRHNGTLMDLGLNTYYP) are excised as a propeptide.

The protein resides in the secreted. In terms of biological role, activates the G-protein coupled receptor TrissinR in vitro, leading to increased intracellular calcium ion levels. This chain is Trissin, found in Drosophila melanogaster (Fruit fly).